The chain runs to 347 residues: MVKSENQIIKSSLHLENQKFGRKPQLSEDLFELFPSICTESKIEVIGLDLQPSHYHALAAIQKLLTATNYRGNLEGSYLSRETNTFKFEGTIPRIKFTKSEYLEAYGVKKYKTSRNKNEFGGKEALIALEALYHLGNEPYLIVATRKRWNKGEEVVDRYQTFSPILRICEGWEGLTPKENKALDEEPFLNLISKKHKGFIIEPCPIIVDQIDSYFVLKPANMYQEIKLRFPNASKFTYTFIDWIVSTATRKKMNSSGSKEWPDKIEIGFENLSYTLRMNRYITSRNWKKIESAINRCIEIAIELKWLNKHERIQGKTISKKEVFYLNKSKFQQISTNKTIQSTTNKN.

This Chlamydia psittaci (Chlamydophila psittaci) protein is Virulence plasmid protein pGP2-D.